Consider the following 942-residue polypeptide: Protein translocase subunit SecA (942 aa).

ATP contacts are provided by residues Q90, 108 to 112 (GEGKT), and D509.

The protein belongs to the SecA family. Monomer and homodimer. Part of the essential Sec protein translocation apparatus which comprises SecA, SecYEG and auxiliary proteins SecDF. Other proteins may also be involved.

Its subcellular location is the cell inner membrane. It is found in the cellular thylakoid membrane. The protein localises to the cytoplasm. The catalysed reaction is ATP + H2O + cellular proteinSide 1 = ADP + phosphate + cellular proteinSide 2.. Part of the Sec protein translocase complex. Interacts with the SecYEG preprotein conducting channel. Has a central role in coupling the hydrolysis of ATP to the transfer of proteins into and across the cell membrane, serving as an ATP-driven molecular motor driving the stepwise translocation of polypeptide chains across the membrane. Functionally, probably participates in protein translocation into and across both the cytoplasmic and thylakoid membranes in cyanobacterial cells. This is Protein translocase subunit SecA from Prochlorococcus marinus (strain NATL2A).